The chain runs to 419 residues: L-rhamnose isomerase (419 aa).

Mn(2+) contacts are provided by His262, Asp294, and Asp296.

This sequence belongs to the rhamnose isomerase family. In terms of assembly, homotetramer. The cofactor is Mn(2+).

The protein localises to the cytoplasm. It catalyses the reaction L-rhamnopyranose = L-rhamnulose. It participates in carbohydrate degradation; L-rhamnose degradation; glycerone phosphate from L-rhamnose: step 1/3. In terms of biological role, catalyzes the interconversion of L-rhamnose and L-rhamnulose. In Escherichia coli O139:H28 (strain E24377A / ETEC), this protein is L-rhamnose isomerase.